Here is a 263-residue protein sequence, read N- to C-terminus: MNGIRKKPATLQLHNIKTSCFIDGSDDQSDRTRSSSGDSTSNSLKLSHHISDELINAIYKELKSPVSPWDKNISQHSPWLLEAASNSIGDSSPLLSPISPLKLRFHKYSVSKQLNSVGKQGFGLSSNHSRYASPSSPARLARGALGEELSNSQYRLECAAIQKLVAQKRANRRSSKSTLKNSANDIEFFDIEEVSSRKGLIDRTPSKRNVTSRVSDAYSRLKSAVKGESSLSFKRNRSKSKRKIQHLGLTEFNGWEHHQCDWL.

Residues 22 to 44 are disordered; the sequence is IDGSDDQSDRTRSSSGDSTSNSL. Residues 34–43 are compositionally biased toward low complexity; it reads SSSGDSTSNS.

The protein localises to the mitochondrion. This is an uncharacterized protein from Schizosaccharomyces pombe (strain 972 / ATCC 24843) (Fission yeast).